A 215-amino-acid polypeptide reads, in one-letter code: MYGKSPTRAVLFLLGLQLTALWPTAAVEIYTPRVLEAVNGTDVRLKCTFSSFAPVGDALTVTWNFRPRDGGPEQFVFYYHVDPFKPMSGRFKDRVAWDGNPERYDVSILLWKLQFDDNGTYTCQVKNPPDVDGLIGEIQLSVVQTVRFSEIHFLALAIGSACALMVIIVIVVVLFQHFRKKRRAERAHRVVEIKSKEEEKLNQEKKASVSLEYTD.

The N-terminal stretch at 1 to 26 (MYGKSPTRAVLFLLGLQLTALWPTAA) is a signal peptide. Positions 27–141 (VEIYTPRVLE…DGLIGEIQLS (115 aa)) constitute an Ig-like V-type domain. Residues 27–154 (VEIYTPRVLE…TVRFSEIHFL (128 aa)) lie on the Extracellular side of the membrane. 2 N-linked (GlcNAc...) asparagine glycosylation sites follow: Asn-39 and Asn-118. Cys-47 and Cys-123 form a disulfide bridge. A helical transmembrane segment spans residues 155 to 175 (ALAIGSACALMVIIVIVVVLF). The Cytoplasmic portion of the chain corresponds to 176-215 (QHFRKKRRAERAHRVVEIKSKEEEKLNQEKKASVSLEYTD).

This sequence belongs to the myelin P0 protein family.

It localises to the membrane. Its function is as follows. Mediates homophilic cell-cell adhesion. The chain is Myelin protein zero-like protein 2 (MPZL2) from Bos taurus (Bovine).